The following is a 76-amino-acid chain: Acyl carrier protein (76 aa).

One can recognise a Carrier domain in the interval 1 to 76; that stretch reads MATFDKVKDI…DVVNYIEQNQ (76 aa). An O-(pantetheine 4'-phosphoryl)serine modification is found at S36.

Belongs to the acyl carrier protein (ACP) family. In terms of processing, 4'-phosphopantetheine is transferred from CoA to a specific serine of apo-ACP by AcpS. This modification is essential for activity because fatty acids are bound in thioester linkage to the sulfhydryl of the prosthetic group.

Its subcellular location is the cytoplasm. Its pathway is lipid metabolism; fatty acid biosynthesis. Functionally, carrier of the growing fatty acid chain in fatty acid biosynthesis. The sequence is that of Acyl carrier protein from Natranaerobius thermophilus (strain ATCC BAA-1301 / DSM 18059 / JW/NM-WN-LF).